Consider the following 562-residue polypeptide: Arf-GAP domain and FG repeat-containing protein 1 (562 aa).

The 125-residue stretch at 11–135 folds into the Arf-GAP domain; sequence EKHLKMLRDM…WYVPPEQAKV (125 aa). The C4-type zinc-finger motif lies at 29–52; sequence CFDCDQRGPTYVNMTVGSFVCTSC. A Phosphoserine modification is found at serine 167. Residues 168–194 form a disordered region; it reads APALHLNKGTPSQSPVVGRSQAQQQEK. Residues 176–191 are compositionally biased toward polar residues; sequence GTPSQSPVVGRSQAQQ. Position 177 is a phosphothreonine (threonine 177). 2 positions are modified to phosphoserine: serine 181 and serine 362. O-linked (GlcNAc) serine glycosylation occurs at serine 367.

As to quaternary structure, interacts with EPS15R and EPS15. Interacts with FCHO1. Post-translationally, O-glycosylated.

It localises to the nucleus. It is found in the cytoplasmic vesicle. In terms of biological role, required for vesicle docking or fusion during acrosome biogenesis. May play a role in RNA trafficking or localization. This is Arf-GAP domain and FG repeat-containing protein 1 (AGFG1) from Bos taurus (Bovine).